The sequence spans 449 residues: Ribulose bisphosphate carboxylase large chain (449 aa).

N6,N6,N6-trimethyllysine is present on K7. Substrate contacts are provided by N116 and T166. K168 (proton acceptor) is an active-site residue. K170 lines the substrate pocket. Residues K194, D196, and E197 each coordinate Mg(2+). An N6-carboxylysine modification is found at K194. Catalysis depends on H287, which acts as the Proton acceptor. 3 residues coordinate substrate: R288, H320, and S372.

It belongs to the RuBisCO large chain family. Type I subfamily. In terms of assembly, heterohexadecamer of 8 large chains and 8 small chains; disulfide-linked. The disulfide link is formed within the large subunit homodimers. It depends on Mg(2+) as a cofactor. Post-translationally, the disulfide bond which can form in the large chain dimeric partners within the hexadecamer appears to be associated with oxidative stress and protein turnover.

It is found in the plastid. The protein localises to the chloroplast. The enzyme catalyses 2 (2R)-3-phosphoglycerate + 2 H(+) = D-ribulose 1,5-bisphosphate + CO2 + H2O. It catalyses the reaction D-ribulose 1,5-bisphosphate + O2 = 2-phosphoglycolate + (2R)-3-phosphoglycerate + 2 H(+). RuBisCO catalyzes two reactions: the carboxylation of D-ribulose 1,5-bisphosphate, the primary event in carbon dioxide fixation, as well as the oxidative fragmentation of the pentose substrate in the photorespiration process. Both reactions occur simultaneously and in competition at the same active site. This is Ribulose bisphosphate carboxylase large chain from Liriope muscari (Big blue lilyturf).